We begin with the raw amino-acid sequence, 377 residues long: Cilia- and flagella-associated protein 263 (377 aa).

Coiled-coil stretches lie at residues 95-139 and 169-355; these read LTVE…ADIR and QKVM…LKGY.

This sequence belongs to the CFAP263 family. Forms a complex with CFAP184; the interaction is required for functional activity in cilia. Interacts with HAP1 and PCM1.

Its subcellular location is the cytoplasm. It is found in the cytoskeleton. The protein resides in the microtubule organizing center. The protein localises to the centrosome. It localises to the centriolar satellite. Its subcellular location is the cell projection. It is found in the cilium. Functionally, component of centriolar satellites contributing to primary cilium formation. In complex with CFAP263, acts as a regulator of ciliary beating that connects radial spoke 3 (RS3) to the inner dynein arm (IDA) and the nexin-dynein regulatory complex (N-DRC). The complex is positioned parallel to N-DRC and forms a connection between the arch at the base of RS3, the IDA tail and N-DRC. The protein is Cilia- and flagella-associated protein 263 (Cfap263) of Mus musculus (Mouse).